Here is a 322-residue protein sequence, read N- to C-terminus: MSADKFRDSTHYRDWIFTEEDLSKTRAKVNEKFTNIVRERMLEELSLQNKEASLEVLPPTLTVEEELELVNYYSFQLNALSSALSLPTHIRSTAILFFKRFYLINSVMEYSPKIISFTSLFLATKCNDHYISIEQFCKNMPKTTPEEVLEYEFNVCQSLKWDLYVWLPFRPLQGFLLDCQTVLPKVAVEKFYECHDLSKKFLIETLHSDIYFLHSPSIIALGAIYHTNPTICLQYIEAKKIPELQPLIISISANLKATKKFKIEKKKAQDYGRKLYFCMNPLRNKSSALYLKRKAEEESTNNNKWAKKFSTSSNVLDKNPFE.

Phosphoserine is present on S310.

The protein belongs to the cyclin family. Cyclin C subfamily. As to quaternary structure, one of the nine subunits forming the core-TFIIH basal transcription factor. Interacts with crk1 and skp1.

It localises to the nucleus. In terms of biological role, essential for progression through the cell cycle. Possesses kinase activity that can be detected when myelin basic protein (MBP) is provided as an exogenous substrate. This is Cyclin mcs2 (mcs2) from Schizosaccharomyces pombe (strain 972 / ATCC 24843) (Fission yeast).